We begin with the raw amino-acid sequence, 713 residues long: P-loop NTPase domain-containing protein LPA1 homolog (713 aa).

Disordered stretches follow at residues 218-249, 504-575, and 650-713; these read AKKRSGISTTSTIDFDKTRPLNDKPDGKPIGK, TSQA…EDLS, and LDSP…APDK. Positions 231–246 are enriched in basic and acidic residues; it reads DFDKTRPLNDKPDGKP. The segment covering 504–531 has biased composition (polar residues); it reads TSQAGSVNESWDNANEGTGSHVPSSSGS. The segment covering 533-544 has biased composition (basic and acidic residues); that stretch reads KKLDGHCKEIKE. The segment covering 551–562 has biased composition (acidic residues); the sequence is SDDDEEEEEEAA. Residues 656–668 show a composition bias toward low complexity; that stretch reads ARSSSALPISASS.

Its function is as follows. Required for the accumulation of phytic acid in seeds. Phytic acid is the primary storage form of phosphorus in cereal grains and other plant seeds. This chain is P-loop NTPase domain-containing protein LPA1 homolog, found in Oryza sativa subsp. japonica (Rice).